A 1187-amino-acid chain; its full sequence is BAI1-associated protein 3 (1187 aa).

The tract at residues 55–81 is disordered; sequence SFRRRTEQDPGSASADPQEPATGAWKP. The 160-residue stretch at 176–335 folds into the C2 1 domain; the sequence is SLEEHTEAIE…VKSARANGTA (160 aa). Residues Asp-211, Asp-217, Asp-295, and Asp-297 each contribute to the Ca(2+) site. One can recognise an MHD1 domain in the interval 663-784; sequence FELYLTLADL…EATLFYTELL (122 aa). Residues 888–996 form the MHD2 domain; sequence DEAVAPLMKY…CSTRECIEQF (109 aa). Residues 1010-1136 enclose the C2 2 domain; it reads RFGRLSVRCH…GVARPQVGGG (127 aa). The Ca(2+) site is built by Leu-1040, Asp-1041, Asp-1047, Asp-1105, Asp-1107, Ser-1110, and Asp-1113.

It belongs to the unc-13 family. In terms of assembly, interacts with ADGRB1; this interaction is direct. Interacts with endosomal SNARE proteins VAMP3, VAMP4, STX6 and STX16; this interaction is increased in the presence of calcium. It depends on Ca(2+) as a cofactor. Predominantly expressed in brain. Also expressed in nonneural tissues such as breast and testes epithelium.

The protein localises to the cytoplasm. It is found in the cytosol. It localises to the recycling endosome membrane. Its subcellular location is the late endosome membrane. The protein resides in the golgi apparatus. The protein localises to the trans-Golgi network membrane. It is found in the cell membrane. Functionally, functions in endosome to Golgi retrograde transport. In response to calcium influx, may interact with SNARE fusion receptors and membrane phospholipids to mediate endosome fusion with the trans-Golgi network. By promoting the recycling of secretory vesicle transmembrane proteins, it indirectly controls dense-core secretory vesicle biogenesis, maturation and their ability to mediate the constitutive and regulated secretion of neurotransmitters and hormones. May regulate behavior and food intake by controlling calcium-stimulated exocytosis of neurotransmitters including NPY and serotonin and hormones like insulin. Proposed to play a role in hypothalamic neuronal firing by modulating gamma-aminobutyric acid (GABA)ergic inhibitory neurotransmission. This Homo sapiens (Human) protein is BAI1-associated protein 3.